Consider the following 507-residue polypeptide: Maturase K (507 aa).

This sequence belongs to the intron maturase 2 family. MatK subfamily.

The protein localises to the plastid. The protein resides in the chloroplast. Functionally, usually encoded in the trnK tRNA gene intron. Probably assists in splicing its own and other chloroplast group II introns. The polypeptide is Maturase K (Humulus lupulus (European hop)).